The chain runs to 236 residues: Lipoarabinomannan carrier protein LprG (236 aa).

A signal peptide spans 1–25 (MQTRPRFAVQSLFAILATAAALVAG). A lipid anchor (N-palmitoyl cysteine) is attached at Cys26. Cys26 is lipidated: S-diacylglycerol cysteine.

This sequence belongs to the LppX/LprAFG lipoprotein family. As to quaternary structure, interacts with itself, Ag85A (MSMEG_6398), LppI (MSMEG_3851) and LppK (MSMEG_3904) in vivo.

It localises to the cell inner membrane. Its subcellular location is the secreted. The protein localises to the cell wall. Its function is as follows. Helps membrane protein MSMEG_3069/MSMEI_2992 (P55) transport triacylglycerides (TAG) across the inner cell membrane into the periplasm and probably ultimately to the outer membrane. Binds TAG in its hydrophobic cavity and transfers it between lipid bilayers. TAG probably regulates lipid metabolism and growth regulation and plays a structural role in the outer membrane. Also binds mannosides, lipoarabinomannan and lipomannan and various glycolipids in the same cavity. Required for MSMEG_3069/MSMEI_2992 export activity. Export of ethidium bromide by MSMEG_3069/MSMEI_2992 can be complemented by the equivalent operon from M.tuberculosis (lprG-Rv1410c). Involved in mycolylation. The polypeptide is Lipoarabinomannan carrier protein LprG (Mycolicibacterium smegmatis (strain ATCC 700084 / mc(2)155) (Mycobacterium smegmatis)).